Here is a 301-residue protein sequence, read N- to C-terminus: MKNDSSTSAAPMKGLVGPLRSSEPARALPAVPPAVYLLEEAADLLVVHLDFHAALETCERAWQSLAEEPTSGTVVEVKCSLCVVGIQALAEMNRWREVLSWVLQYYQVPEKLPPKVLELCILLYSKMREPRAVLAMADAWLQDPDNQGLPEYGSLAELHLLRVLLPLGRLSEAEGLAVGSAAFSEEQREAVLQAICTARQQHTREHLSSQEQQQMSQEGSFSHKLMSLLRLLRRLWDAAASHLLSQPFKKSLLAALILCLLVLRFDPATPSSLPFLYQLAHLFRRIQKATLSRLYPLALRD.

Over 1 to 246 (MKNDSSTSAA…DAAASHLLSQ (246 aa)) the chain is Cytoplasmic. The helical; Signal-anchor for type II membrane protein transmembrane segment at 247–263 (PFKKSLLAALILCLLVL) threads the bilayer. Residues 264-301 (RFDPATPSSLPFLYQLAHLFRRIQKATLSRLYPLALRD) are Peroxisomal-facing.

This sequence belongs to the peroxin-26 family. As to quaternary structure, interacts directly with PEX6 via its cytoplasmic domain. Interacts indirectly with PEX1, via its interaction with PEX6.

It localises to the peroxisome membrane. Functionally, peroxisomal docking factor that anchors PEX1 and PEX6 to peroxisome membranes. It is therefore required for the formation of the PEX1-PEX6 AAA ATPase complex, a complex that mediates the extraction of the PEX5 receptor from peroxisomal membrane. This chain is Peroxisome assembly protein 26 (Pex26), found in Cricetulus griseus (Chinese hamster).